Consider the following 105-residue polypeptide: Small ribosomal subunit protein uS14m (105 aa).

Belongs to the universal ribosomal protein uS14 family. As to quaternary structure, component of the mitochondrial small ribosomal subunit (mt-SSU). Mature yeast 74S mitochondrial ribosomes consist of a small (37S) and a large (54S) subunit. The 37S small subunit contains a 15S ribosomal RNA (15S mt-rRNA) and at least 32 different proteins. The 54S large subunit contains a 21S rRNA (21S mt-rRNA) and at least 45 different proteins.

It is found in the mitochondrion. Component of the mitochondrial ribosome (mitoribosome), a dedicated translation machinery responsible for the synthesis of mitochondrial genome-encoded proteins, including at least some of the essential transmembrane subunits of the mitochondrial respiratory chain. The mitoribosomes are attached to the mitochondrial inner membrane and translation products are cotranslationally integrated into the membrane. The sequence is that of Small ribosomal subunit protein uS14m (mrp2) from Schizosaccharomyces pombe (strain 972 / ATCC 24843) (Fission yeast).